Reading from the N-terminus, the 183-residue chain is MTATAQQLEFLKNSIQSIPDYPKPGILFRDVTSLLEDPKAYALSIELLVERYRHAGITKVVGTEARGFLFGAPVALGLGVGFVPVRKPGKLPRKTFAEDYALEYGTDTLELHCDAIQPGDVVLVVDDLLATGGTIEATVNLIRRAGGSVKDAAFIINLFDLSGEARLKALGVESYSLVSFPGH.

It belongs to the purine/pyrimidine phosphoribosyltransferase family. In terms of assembly, homodimer.

The protein localises to the cytoplasm. It carries out the reaction AMP + diphosphate = 5-phospho-alpha-D-ribose 1-diphosphate + adenine. It participates in purine metabolism; AMP biosynthesis via salvage pathway; AMP from adenine: step 1/1. Catalyzes a salvage reaction resulting in the formation of AMP, that is energically less costly than de novo synthesis. This is Adenine phosphoribosyltransferase from Erwinia tasmaniensis (strain DSM 17950 / CFBP 7177 / CIP 109463 / NCPPB 4357 / Et1/99).